The chain runs to 387 residues: Succinyl-diaminopimelate desuccinylase (387 aa).

H74 contacts Zn(2+). The active site involves D76. D107 provides a ligand contact to Zn(2+). The Proton acceptor role is filled by E142. Residues E143, E171, and H360 each coordinate Zn(2+).

The protein belongs to the peptidase M20A family. DapE subfamily. Homodimer. Requires Zn(2+) as cofactor. The cofactor is Co(2+).

It carries out the reaction N-succinyl-(2S,6S)-2,6-diaminopimelate + H2O = (2S,6S)-2,6-diaminopimelate + succinate. The protein operates within amino-acid biosynthesis; L-lysine biosynthesis via DAP pathway; LL-2,6-diaminopimelate from (S)-tetrahydrodipicolinate (succinylase route): step 3/3. In terms of biological role, catalyzes the hydrolysis of N-succinyl-L,L-diaminopimelic acid (SDAP), forming succinate and LL-2,6-diaminopimelate (DAP), an intermediate involved in the bacterial biosynthesis of lysine and meso-diaminopimelic acid, an essential component of bacterial cell walls. This is Succinyl-diaminopimelate desuccinylase from Rhodopseudomonas palustris (strain BisA53).